A 487-amino-acid polypeptide reads, in one-letter code: uncharacterized protein (487 aa).

ABC transporter domains follow at residues 5–249 (VKFA…IPVK) and 265–487 (ISME…VIHA). 297 to 304 (GSNGSGKT) is an ATP binding site.

Belongs to the ABC transporter superfamily.

The protein localises to the mitochondrion. This is an uncharacterized protein from Schizosaccharomyces pombe (strain 972 / ATCC 24843) (Fission yeast).